The following is a 354-amino-acid chain: AT-rich binding protein (354 aa).

The C2H2-type 1 zinc-finger motif lies at 31-54; sequence IVCHTCQEELQTQDKFWKHIQDEH. 2 disordered regions span residues 84–124 and 256–276; these read LPLY…HDDQ and EVQQHKESTNNSTTASASSAM. Composition is skewed to basic and acidic residues over residues 89–100 and 109–124; these read KVSENDQQRDDV and QKEPKDYTEMRAHDDQ. The segment covering 264–276 has biased composition (low complexity); it reads TNNSTTASASSAM. C2H2-type zinc fingers lie at residues 285–309 and 315–338; these read YICDFENCGLKFKYHSRLELHRSVH and FACEICGASFKQSCNLSTHRKKKH.

As to quaternary structure, homooctamer. In terms of tissue distribution, fat body.

Its subcellular location is the nucleus. Functionally, may be a transcription factor for genes having (A+T) stretches in their promoter and/or enhancer regions. Binds to AT rich DNA. The protein is AT-rich binding protein of Sarcophaga peregrina (Flesh fly).